Consider the following 430-residue polypeptide: Acetyl-CoA acetyltransferase FG05087, mitochondrial (430 aa).

Residues 1 to 32 (MTVTQLRSAGRLAQLAGHVNGARQFSTRPALR) constitute a mitochondrion transit peptide. C122 functions as the Acyl-thioester intermediate in the catalytic mechanism. Position 217 (Y217) interacts with K(+). K260 contributes to the CoA binding site. Residue A278 coordinates K(+). S282 is a CoA binding site. Catalysis depends on proton acceptor residues H385 and C413. N414 provides a ligand contact to chloride.

Belongs to the thiolase-like superfamily. Thiolase family. As to quaternary structure, homotetramer. It depends on K(+) as a cofactor.

The protein localises to the mitochondrion. The catalysed reaction is 2 acetyl-CoA = acetoacetyl-CoA + CoA. Mitochondrial acetyl-CoA acetyltransferase that catalyzes both the formation and degradation of acetoacetyl-CoA. Seems not to be involved in ergosterol biosynthesis. Plays an important role in growth, morphogenesis and maintaining mitochondrial function including the response to oxidative stresses. The polypeptide is Acetyl-CoA acetyltransferase FG05087, mitochondrial (Gibberella zeae (strain ATCC MYA-4620 / CBS 123657 / FGSC 9075 / NRRL 31084 / PH-1) (Wheat head blight fungus)).